A 167-amino-acid polypeptide reads, in one-letter code: MIIYKDIFSGDELLSDAYDINEVDGVIYEADCAMVKVGGDNIDIGANPSTEDGEDDVEDGTEVVNNVVHSFRLQPTGFDKKSFLTYIKGYMKAVKAKLQEKNPDAIPTFEKGAQVYVKKVIGSFKDWEFFTGESMDPDAMVVMLNYREDGTTPFVAIWKHGIDEEKI.

In terms of domain architecture, TCTP spans 1–167 (MIIYKDIFSG…WKHGIDEEKI (167 aa)).

This sequence belongs to the TCTP family.

The protein resides in the cytoplasm. It localises to the cytoskeleton. Functionally, involved in protein synthesis. Involved in microtubule stabilization. This is Translationally-controlled tumor protein homolog from Candida glabrata (strain ATCC 2001 / BCRC 20586 / JCM 3761 / NBRC 0622 / NRRL Y-65 / CBS 138) (Yeast).